A 253-amino-acid chain; its full sequence is Imidazole glycerol phosphate synthase subunit HisF (253 aa).

Catalysis depends on residues D11 and D130.

The protein belongs to the HisA/HisF family. In terms of assembly, heterodimer of HisH and HisF.

The protein localises to the cytoplasm. The catalysed reaction is 5-[(5-phospho-1-deoxy-D-ribulos-1-ylimino)methylamino]-1-(5-phospho-beta-D-ribosyl)imidazole-4-carboxamide + L-glutamine = D-erythro-1-(imidazol-4-yl)glycerol 3-phosphate + 5-amino-1-(5-phospho-beta-D-ribosyl)imidazole-4-carboxamide + L-glutamate + H(+). The protein operates within amino-acid biosynthesis; L-histidine biosynthesis; L-histidine from 5-phospho-alpha-D-ribose 1-diphosphate: step 5/9. IGPS catalyzes the conversion of PRFAR and glutamine to IGP, AICAR and glutamate. The HisF subunit catalyzes the cyclization activity that produces IGP and AICAR from PRFAR using the ammonia provided by the HisH subunit. The polypeptide is Imidazole glycerol phosphate synthase subunit HisF (Opitutus terrae (strain DSM 11246 / JCM 15787 / PB90-1)).